A 371-amino-acid chain; its full sequence is Neuropeptide Y receptor type 6 (371 aa).

At 1 to 31 (MEVLTNQPTPNKTSGKSNNSAFFYFESCQPP) the chain is on the extracellular side. N-linked (GlcNAc...) asparagine glycosylation is found at Asn-11 and Asn-18. The chain crosses the membrane as a helical span at residues 32–52 (FLAILLLLIAYTVILIMGIFG). Residues 53 to 82 (NLSLIIIIFKKQREAQNVTNILIANLSLSD) lie on the Cytoplasmic side of the membrane. The helical transmembrane segment at 83-103 (ILVCVMCIPFTVIYTLMDHWV) threads the bilayer. The Extracellular segment spans residues 104-111 (FGNTMCKL). Cys-109 and Cys-196 are oxidised to a cystine. A helical membrane pass occupies residues 112–132 (TSYVQSVSVSVSIFSLVLIAI). The Cytoplasmic portion of the chain corresponds to 133–150 (ERYQLIVNPRGWKPRVAH). The helical transmembrane segment at 151–171 (AYWGIILIWLISLTLSIPLFL) threads the bilayer. Residues 172-206 (SYHLTNEPFHNLSLPTDIYTHQVACVEIWPSKLNQ) lie on the Extracellular side of the membrane. N-linked (GlcNAc...) asparagine glycosylation is present at Asn-182. A helical membrane pass occupies residues 207 to 227 (LLFSTSLFMLQYFVPLGFILI). Residues 228–263 (CYLKIVLCLRKRTRQVDRRKENKSRLNENKRVNVML) are Cytoplasmic-facing. Residues 264 to 284 (ISIVVTFGACWLPLNIFNVIF) traverse the membrane as a helical segment. Over 285–297 (DWYHEMLMSCHHD) the chain is Extracellular. Residues 298 to 318 (LVFVVCHLIAMVSTCINPLFY) form a helical membrane-spanning segment. Residues 319-371 (GFLNKNFQKDLMMLIHHCWCGEPQESYENIAMSTMHTDESKGSLKLAHIPTGI) are Cytoplasmic-facing. Residue Cys-336 is the site of S-palmitoyl cysteine attachment.

This sequence belongs to the G-protein coupled receptor 1 family. In terms of tissue distribution, kidney and discrete regions of the hypothalamus including the suprachiasmatic nucleus, anterior hypothalamus, bed nucleus stria terminalis, and the ventromedial nucleus.

The protein resides in the cell membrane. Functionally, receptor for neuropeptide Y and peptide YY. The rank order of affinity of this receptor for pancreatic polypeptides is NPY = PYY &gt;= NPY (2-36) = [Leu-31, Pro-34] NPY &gt; NPY (13-36) &gt; PP. The activity of this receptor is mediated by G proteins that inhibits adenylate cyclase activity. In Mus musculus (Mouse), this protein is Neuropeptide Y receptor type 6 (Npy6r).